A 99-amino-acid chain; its full sequence is UPF0213 protein PC1_0597 (99 aa).

The GIY-YIG domain occupies 8 to 83 (PQWYLYILRT…KQLSKNQKER (76 aa)).

Belongs to the UPF0213 family.

The sequence is that of UPF0213 protein PC1_0597 from Pectobacterium carotovorum subsp. carotovorum (strain PC1).